Here is a 156-residue protein sequence, read N- to C-terminus: Small ribosomal subunit protein uS7 (156 aa).

Belongs to the universal ribosomal protein uS7 family. In terms of assembly, part of the 30S ribosomal subunit. Contacts proteins S9 and S11.

One of the primary rRNA binding proteins, it binds directly to 16S rRNA where it nucleates assembly of the head domain of the 30S subunit. Is located at the subunit interface close to the decoding center, probably blocks exit of the E-site tRNA. This chain is Small ribosomal subunit protein uS7, found in Paracoccus denitrificans (strain Pd 1222).